The chain runs to 614 residues: Protein NRT1/ PTR FAMILY 7.3 (614 aa).

2 consecutive transmembrane segments (helical) span residues 41-61 and 87-107; these read WVAGIVILLNQGLATLAFFGV and WTGTVYIFSLVGAFLSDSYWG. T111 is subject to Phosphothreonine. Transmembrane regions (helical) follow at residues 114–134, 152–172, 196–216, 226–246, 355–375, 390–410, 435–455, 515–535, and 559–579; these read IFQVIFVIGLSSLSLSSYMFL, MMEITMFYFSIYLIALGYGGY, IAFFSYFYLALNLGSLFSNTI, WALGFWASTGSAIIGLILFLV, PIWLCTIIYSVVFTQMASLFV, IPPASMSSFDILSVALFIFLY, MGIGLVIAVIAMIAAGIVECY, LCMMSMSMGNFVSSLLVTMVV, and FYFLLAALTSIDLVVYIACAK. Residues 592-614 form a disordered region; that stretch reads MQDMSDDDYDTESEEEREKDSKV. A compositionally biased stretch (acidic residues) spans 593 to 606; that stretch reads QDMSDDDYDTESEE.

The protein belongs to the major facilitator superfamily. Proton-dependent oligopeptide transporter (POT/PTR) (TC 2.A.17) family. High expression in roots. Barely detected in shoots. Expressed in root pericycle cells close to the xylem.

The protein resides in the cell membrane. Functionally, low-affinity proton-dependent bidirectional nitrate transporter. Involved in nitrate loading into xylem and not in nitrate uptake. Not involved in histidine or dipeptides transport. This Arabidopsis thaliana (Mouse-ear cress) protein is Protein NRT1/ PTR FAMILY 7.3 (NPF7.3).